We begin with the raw amino-acid sequence, 593 residues long: PiggyBac transposable element-derived protein 3 (593 aa).

Disordered regions lie at residues 27–53 and 69–105; these read IQPP…INNL and SDAE…SRRR. Acidic residues predominate over residues 38-47; the sequence is SDEESGDEEG. S86 carries the phosphoserine modification.

As to expression, expressed in heart and oocytes, but not in granulosa cells (at protein level).

It localises to the nucleus. Its function is as follows. Binds in vitro to PGBD3-related transposable elements, called MER85s; these non-autonomous 140 bp elements are characterized by the presence of PGBD3 terminal inverted repeats and the absence of internal transposase ORF. In Homo sapiens (Human), this protein is PiggyBac transposable element-derived protein 3 (PGBD3).